We begin with the raw amino-acid sequence, 499 residues long: MMLSNLLILPMLLPFLCALILVFLKNNDRISKYLYLGTMTITTIISLMLLIYVQRHRPITLDFGGWSAPFGIQFLGDSLSLIMVTTASFVITLIMAYGFGRGEHKANRYHLPSFILFLSVGVIGSFLTSDLFNLYVMFEIMLLASFVLITLGQSVEQLRAAIIYVVLNIIGSWLFLLGIGLLYKTVGTLNFSHIAMRLNDMGDNRTVTMISLIFLVAFSAKAALVLFMWLPKAYAVLNTELAALFAALMTKVGAYALIRFFTLLFDQHNDLIHPLLATMAAITMVIGAIGVIAYKDIKKIAAYQVIISIGFIILGLGTNTFAGINGAIFYLVNDIVVKTLLFFIIGSLVYITGYRQYQYLNGLAKKEPLFGVAFIIMIFAIGGVPPFSGFPGKVLIFQGALQNGNYIGLALMIITSLIAMYSLFRILFYMYFGDKDGEEVNFKKIPLYRKRILSILVVVVIAIGIAAPVVLNVTSDATELNTSDQLYQKLVNPHLKGED.

The next 14 membrane-spanning stretches (helical) occupy residues 3–23, 33–53, 79–99, 109–129, 131–151, 162–182, 210–230, 241–261, 272–292, 309–329, 331–351, 370–390, 404–424, and 452–472; these read LSNL…ILVF, YLYL…LIYV, LSLI…AYGF, YHLP…FLTS, LFNL…LITL, IIYV…IGLL, ISLI…FMWL, LAAL…IRFF, IHPL…IGVI, IGFI…GAIF, LVND…LVYI, FGVA…FSGF, GNYI…YSLF, and ILSI…VVLN.

The protein belongs to the CPA3 antiporters (TC 2.A.63) subunit D family. As to quaternary structure, may form a heterooligomeric complex that consists of seven subunits: mnhA2, mnhB2, mnhC2, mnhD2, mnhE2, mnhF2 and mnhG2.

The protein resides in the cell membrane. In terms of biological role, expression of the mnh2 operon in E.coli is not able to catalyze Na(+)Li(+)/H(+) antiport. It does however confer higher growth rates than the control strain at up to pH 9.5. The operon may encode an NADH-ubiquinone oxidoreductase. The protein is Putative antiporter subunit mnhD2 (mnhD2) of Staphylococcus aureus.